A 434-amino-acid polypeptide reads, in one-letter code: 3-phosphoshikimate 1-carboxyvinyltransferase (434 aa).

3-phosphoshikimate is bound by residues lysine 22, serine 23, and arginine 27. Residue lysine 22 coordinates phosphoenolpyruvate. The phosphoenolpyruvate site is built by glycine 93 and arginine 121. Residues serine 168, serine 169, glutamine 170, serine 199, aspartate 320, and lysine 347 each contribute to the 3-phosphoshikimate site. Residue glutamine 170 participates in phosphoenolpyruvate binding. Aspartate 320 acts as the Proton acceptor in catalysis. Residues arginine 351, arginine 394, and lysine 419 each coordinate phosphoenolpyruvate.

It belongs to the EPSP synthase family. In terms of assembly, monomer.

It localises to the cytoplasm. It carries out the reaction 3-phosphoshikimate + phosphoenolpyruvate = 5-O-(1-carboxyvinyl)-3-phosphoshikimate + phosphate. The protein operates within metabolic intermediate biosynthesis; chorismate biosynthesis; chorismate from D-erythrose 4-phosphate and phosphoenolpyruvate: step 6/7. Its function is as follows. Catalyzes the transfer of the enolpyruvyl moiety of phosphoenolpyruvate (PEP) to the 5-hydroxyl of shikimate-3-phosphate (S3P) to produce enolpyruvyl shikimate-3-phosphate and inorganic phosphate. In Burkholderia vietnamiensis (strain G4 / LMG 22486) (Burkholderia cepacia (strain R1808)), this protein is 3-phosphoshikimate 1-carboxyvinyltransferase.